The sequence spans 201 residues: MSKVLVLKSSILAGYSQSNQLADHFTTQWQSAHPDDSITVRDLAAQPIPVLDGELVGALRPSDATLTPRQQEALKLSDDLIAELQAHDVIVIAAPMYNFNIPTQLKNYFDLVARAGVTFRYTEQGPEGLVKGKRAIVLTSRGGIHKGTPTDLLEPYLRVFLGFLGLTDLEFVFAEGYGYGPDVAQKATEDAKTQLSQLVTA.

Residues serine 10, 16 to 18, 96 to 99, and 140 to 143 contribute to the FMN site; these read SQS, MYNF, and SRGG.

This sequence belongs to the azoreductase type 1 family. In terms of assembly, homodimer. FMN serves as cofactor.

The catalysed reaction is 2 a quinone + NADH + H(+) = 2 a 1,4-benzosemiquinone + NAD(+). It catalyses the reaction N,N-dimethyl-1,4-phenylenediamine + anthranilate + 2 NAD(+) = 2-(4-dimethylaminophenyl)diazenylbenzoate + 2 NADH + 2 H(+). In terms of biological role, quinone reductase that provides resistance to thiol-specific stress caused by electrophilic quinones. Its function is as follows. Also exhibits azoreductase activity. Catalyzes the reductive cleavage of the azo bond in aromatic azo compounds to the corresponding amines. The protein is FMN-dependent NADH:quinone oxidoreductase of Pectobacterium atrosepticum (strain SCRI 1043 / ATCC BAA-672) (Erwinia carotovora subsp. atroseptica).